Here is a 267-residue protein sequence, read N- to C-terminus: 4-hydroxy-tetrahydrodipicolinate reductase (267 aa).

Residues 9–14 (GAAGRM) and aspartate 35 each bind NAD(+). An NADP(+)-binding site is contributed by arginine 36. Residues 99 to 101 (GTT) and 123 to 126 (APNY) each bind NAD(+). Histidine 156 acts as the Proton donor/acceptor in catalysis. Residue histidine 157 coordinates (S)-2,3,4,5-tetrahydrodipicolinate. The active-site Proton donor is lysine 160. 166-167 (GT) provides a ligand contact to (S)-2,3,4,5-tetrahydrodipicolinate.

This sequence belongs to the DapB family.

It localises to the cytoplasm. It carries out the reaction (S)-2,3,4,5-tetrahydrodipicolinate + NAD(+) + H2O = (2S,4S)-4-hydroxy-2,3,4,5-tetrahydrodipicolinate + NADH + H(+). It catalyses the reaction (S)-2,3,4,5-tetrahydrodipicolinate + NADP(+) + H2O = (2S,4S)-4-hydroxy-2,3,4,5-tetrahydrodipicolinate + NADPH + H(+). Its pathway is amino-acid biosynthesis; L-lysine biosynthesis via DAP pathway; (S)-tetrahydrodipicolinate from L-aspartate: step 4/4. Catalyzes the conversion of 4-hydroxy-tetrahydrodipicolinate (HTPA) to tetrahydrodipicolinate. This Alkalilimnicola ehrlichii (strain ATCC BAA-1101 / DSM 17681 / MLHE-1) protein is 4-hydroxy-tetrahydrodipicolinate reductase.